The following is a 472-amino-acid chain: MSMSSSNITSGFIDIATFDEIEKYMYGGPTATAYFVREIRKSTWFTQVPVPLSRNTGNAAFGQEWSVSISRAGDYLLQTWLRVNIPPVTLSGLLGNTYSLRWTKNLMHNLIREATITFNDLVAARFDNYHLDFWSAFTVPASKRNGYDNMIGNVSSLINPVAPGGTLGSVGGINLNLPLPFFFSRDTGVALPTAALPYNEMQINFNFRDWHELLILTNSALVPPASSYVSIVVGTHISAAPVLGPVQVWANYAIVSNEERRRMGCAIRDILIEQVQTAPRQNYVPLTNASPTFDIRFSHAIKALFFAVRNKTSAAEWSNYATSSPVVTGATVNYEPTGSFDPIANTTLIYENTNRLGAMGSDYFSLINPFYHAPTIPSFIGYHLYSYSLHFYDLDPMGSTNYGKLTNVFVVPAASSAAISAAGGTGGQAGSDYAQSYEFVIVAVNNNIVRIENSLVRNRRRWSREGPMVMVC.

This sequence belongs to the NCLDV major capsid protein family. Homotrimer. In terms of processing, the N-terminus is blocked.

The protein localises to the virion. Its function is as follows. Major capsid protein that self assembles to form an icosahedral capsid. Represents around 50% of the total virion protein mass. The sequence is that of Major capsid protein (MCP) from Simulium (IIV-22).